A 207-amino-acid chain; its full sequence is Large ribosomal subunit protein bL25 (207 aa).

The protein belongs to the bacterial ribosomal protein bL25 family. CTC subfamily. Part of the 50S ribosomal subunit; part of the 5S rRNA/L5/L18/L25 subcomplex. Contacts the 5S rRNA. Binds to the 5S rRNA independently of L5 and L18.

In terms of biological role, this is one of the proteins that binds to the 5S RNA in the ribosome where it forms part of the central protuberance. This is Large ribosomal subunit protein bL25 from Paraburkholderia xenovorans (strain LB400).